Here is a 368-residue protein sequence, read N- to C-terminus: Alanine racemase (368 aa).

Lysine 40 acts as the Proton acceptor; specific for D-alanine in catalysis. Residue lysine 40 is modified to N6-(pyridoxal phosphate)lysine. Arginine 134 provides a ligand contact to substrate. The active-site Proton acceptor; specific for L-alanine is the tyrosine 263. Residue methionine 310 participates in substrate binding.

The protein belongs to the alanine racemase family. It depends on pyridoxal 5'-phosphate as a cofactor.

The enzyme catalyses L-alanine = D-alanine. The protein operates within amino-acid biosynthesis; D-alanine biosynthesis; D-alanine from L-alanine: step 1/1. In terms of biological role, catalyzes the interconversion of L-alanine and D-alanine. May also act on other amino acids. The polypeptide is Alanine racemase (alr) (Listeria innocua serovar 6a (strain ATCC BAA-680 / CLIP 11262)).